Reading from the N-terminus, the 304-residue chain is DCN1-like protein 3 (304 aa).

Disordered regions lie at residues 1 to 86 (MGQC…AEES) and 284 to 304 (EGEG…EEQT). The N-myristoyl glycine moiety is linked to residue Gly2. The 193-residue stretch at 86-278 (SSLQRLEELF…LFDTFVEWEM (193 aa)) folds into the DCUN1 domain.

In terms of assembly, part of a complex containing DCUN1D3, CUL3 and RBX1. Interacts (via the DCUN1 domain) with the unneddylated cullins: interacts with CUL1, CUL2, CUL3, CUL4A, CUL4B and CUL5; these interactions promote the cullin neddylation and the identity of the cullin dictates the affinity of the interaction. Interacts preferentially with CUL3; this interaction triggers the relocalization of CUL3 to the cell membrane where CUL3 is neddylated. Interacts (via DCUN1 domain) with RBX1. May also interact with regulators or subunits of cullin-RING ligases such as RNF7, ELOB and DDB1; these interactions are bridged by cullins. Interacts (via DCUN1 domain) with CAND1; this interaction is bridged by cullins and strongly inhibits cullin neddylation. These CAND-cullin-DCNL complexes can only be neddylated in the presence of a substrate adapter. Interacts (via DCUN1 domain) with the N-terminally acetylated form of UBE2M and UBE2F. In terms of tissue distribution, tends to be down-regulated in different type of cancers, including lung neuroendocrine carcinoma, thyroid Huerthle cell carcinoma and lung squamous cell carcinoma. Mostly expressed in testis and brain. Highly expressed in liver, bladder and renal normal tissue than their tumor tissue counterparts. Palmitoylation stabilizes DCUN1D3 at the cell membrane.

The protein resides in the cell membrane. The protein localises to the cytoplasm. Its subcellular location is the nucleus. It localises to the perinuclear region. Functionally, contributes to the neddylation of all cullins by transferring NEDD8 from N-terminally acetylated NEDD8-conjugating E2s enzyme to different cullin C-terminal domain-RBX complexes and may play a role in the cell cycle progression by regulating the SCF ubiquitin E3 ligase complex, after UV damage. At the cell membrane, can promote and as well inhibit cullins neddylation. The sequence is that of DCN1-like protein 3 from Homo sapiens (Human).